The following is a 263-amino-acid chain: Aquaglyceroporin (263 aa).

Residues 1-22 (MDQFVFSGGSEGGGELGGDRER) form a disordered region. Transmembrane regions (helical) follow at residues 41–61 (KYFC…FGLA), 64–84 (GGAQ…ITLF), 113–133 (LCYV…GYGI), 157–177 (VIPT…YGVM), 180–200 (LTVP…GATM), and 222–242 (VAAL…AFLG).

It belongs to the MIP/aquaporin (TC 1.A.8) family. Multimer.

It localises to the vacuole membrane. It catalyses the reaction H2O(in) = H2O(out). The catalysed reaction is glycerol(in) = glycerol(out). The enzyme catalyses urea(in) = urea(out). Its function is as follows. Mediates water and glycerol transport across cell membranes. Permeable to selected sugar alcohols of up to five carbons and urea. Permeable to methylamine/methylammonium. The chain is Aquaglyceroporin from Toxoplasma gondii (strain ATCC 50611 / Me49).